A 319-amino-acid chain; its full sequence is Acetyl-coenzyme A carboxylase carboxyl transferase subunit beta, chloroplastic (319 aa).

Positions 47–319 constitute a CoA carboxyltransferase N-terminal domain; the sequence is LWVQCDNCES…ELFYVLQSSS (273 aa). 4 residues coordinate Zn(2+): C51, C54, C70, and C73. The C4-type zinc-finger motif lies at 51 to 73; sequence CDNCESLLYIRFLRENKSVCEEC.

Belongs to the AccD/PCCB family. In terms of assembly, acetyl-CoA carboxylase is a heterohexamer composed of biotin carboxyl carrier protein, biotin carboxylase and 2 subunits each of ACCase subunit alpha and ACCase plastid-coded subunit beta (accD). The cofactor is Zn(2+).

Its subcellular location is the plastid. It is found in the chloroplast stroma. The enzyme catalyses N(6)-carboxybiotinyl-L-lysyl-[protein] + acetyl-CoA = N(6)-biotinyl-L-lysyl-[protein] + malonyl-CoA. Its pathway is lipid metabolism; malonyl-CoA biosynthesis; malonyl-CoA from acetyl-CoA: step 1/1. In terms of biological role, component of the acetyl coenzyme A carboxylase (ACC) complex. Biotin carboxylase (BC) catalyzes the carboxylation of biotin on its carrier protein (BCCP) and then the CO(2) group is transferred by the transcarboxylase to acetyl-CoA to form malonyl-CoA. The sequence is that of Acetyl-coenzyme A carboxylase carboxyl transferase subunit beta, chloroplastic from Picea abies (Norway spruce).